The following is a 351-amino-acid chain: Phosphoribosylformylglycinamidine cyclo-ligase (351 aa).

This sequence belongs to the AIR synthase family.

The protein resides in the cytoplasm. It carries out the reaction 2-formamido-N(1)-(5-O-phospho-beta-D-ribosyl)acetamidine + ATP = 5-amino-1-(5-phospho-beta-D-ribosyl)imidazole + ADP + phosphate + H(+). It participates in purine metabolism; IMP biosynthesis via de novo pathway; 5-amino-1-(5-phospho-D-ribosyl)imidazole from N(2)-formyl-N(1)-(5-phospho-D-ribosyl)glycinamide: step 2/2. In Burkholderia pseudomallei (strain 1710b), this protein is Phosphoribosylformylglycinamidine cyclo-ligase.